The sequence spans 283 residues: Bifunctional protein FolD (283 aa).

NADP(+) contacts are provided by residues Gly164 to Ser166 and Ser189.

This sequence belongs to the tetrahydrofolate dehydrogenase/cyclohydrolase family. Homodimer.

The enzyme catalyses (6R)-5,10-methylene-5,6,7,8-tetrahydrofolate + NADP(+) = (6R)-5,10-methenyltetrahydrofolate + NADPH. It carries out the reaction (6R)-5,10-methenyltetrahydrofolate + H2O = (6R)-10-formyltetrahydrofolate + H(+). Its pathway is one-carbon metabolism; tetrahydrofolate interconversion. In terms of biological role, catalyzes the oxidation of 5,10-methylenetetrahydrofolate to 5,10-methenyltetrahydrofolate and then the hydrolysis of 5,10-methenyltetrahydrofolate to 10-formyltetrahydrofolate. This Lactobacillus acidophilus (strain ATCC 700396 / NCK56 / N2 / NCFM) protein is Bifunctional protein FolD.